Reading from the N-terminus, the 134-residue chain is ATP synthase epsilon chain (134 aa).

Belongs to the ATPase epsilon chain family. In terms of assembly, F-type ATPases have 2 components, CF(1) - the catalytic core - and CF(0) - the membrane proton channel. CF(1) has five subunits: alpha(3), beta(3), gamma(1), delta(1), epsilon(1). CF(0) has three main subunits: a, b and c.

Its subcellular location is the cell inner membrane. Its function is as follows. Produces ATP from ADP in the presence of a proton gradient across the membrane. The chain is ATP synthase epsilon chain from Nitratidesulfovibrio vulgaris (strain ATCC 29579 / DSM 644 / CCUG 34227 / NCIMB 8303 / VKM B-1760 / Hildenborough) (Desulfovibrio vulgaris).